The sequence spans 297 residues: Streptogrisin-A (297 aa).

The N-terminal stretch at 1-38 (MTFKRFSPLSSTSRYARLLAVASGLVAAAALATPSAVA) is a signal peptide. A propeptide spanning residues 39–115 (APEAESKATV…VKRAEGKFTP (77 aa)) is cleaved from the precursor. Cys-130 and Cys-150 are joined by a disulfide. Active-site charge relay system residues include His-149, Asp-171, and Ser-253. Cysteines 247 and 274 form a disulfide.

Belongs to the peptidase S1 family. As to quaternary structure, monomer.

The enzyme catalyses Hydrolysis of proteins with specificity similar to chymotrypsin.. Its function is as follows. Has a primary specificity for large aliphatic or aromatic amino acids. The protein is Streptogrisin-A (sprA) of Streptomyces griseus.